The following is a 136-amino-acid chain: Probable disulfide formation protein (136 aa).

A helical transmembrane segment spans residues 7–26 (SYALYFAWAISCAGTLISIF). A disulfide bridge connects residues C36 and C39. 2 helical membrane passes run 41–60 (YQRI…AYRE) and 67–84 (YILP…YQVF). A disulfide bridge connects residues C96 and C101. Residues 109–131 (SYVTIPMASVVAFGAIVCLLVLT) traverse the membrane as a helical segment.

Belongs to the DsbB family. BdbC subfamily.

Its subcellular location is the cell inner membrane. Required for disulfide bond formation in some proteins. The chain is Probable disulfide formation protein from Chlamydia pneumoniae (Chlamydophila pneumoniae).